The sequence spans 280 residues: Beta-glucosyl-HMC-alpha-glucosyl-transferase (280 aa).

Its pathway is genetic information processing; DNA modification. Functionally, transfers a gentiobiosyl-group on a hydroxymethylcytosine residue in DNA. Is involved in a DNA modification process to protects the phage genome against its own nucleases and the host restriction endonuclease system. This is Beta-glucosyl-HMC-alpha-glucosyl-transferase from Enterobacteria phage T6 (Bacteriophage T6).